A 155-amino-acid chain; its full sequence is 2-C-methyl-D-erythritol 2,4-cyclodiphosphate synthase (155 aa).

Residues D8 and H10 each contribute to the a divalent metal cation site. 4-CDP-2-C-methyl-D-erythritol 2-phosphate contacts are provided by residues 8 to 10 (DVH) and 34 to 35 (HS). H42 is a binding site for a divalent metal cation. 4-CDP-2-C-methyl-D-erythritol 2-phosphate contacts are provided by residues 56 to 58 (DIG), 61 to 65 (FPDSD), 100 to 106 (AQKPKML), 132 to 135 (TTEE), F139, and K142.

This sequence belongs to the IspF family. In terms of assembly, homotrimer. Requires a divalent metal cation as cofactor.

The enzyme catalyses 4-CDP-2-C-methyl-D-erythritol 2-phosphate = 2-C-methyl-D-erythritol 2,4-cyclic diphosphate + CMP. Its pathway is isoprenoid biosynthesis; isopentenyl diphosphate biosynthesis via DXP pathway; isopentenyl diphosphate from 1-deoxy-D-xylulose 5-phosphate: step 4/6. Its function is as follows. Involved in the biosynthesis of isopentenyl diphosphate (IPP) and dimethylallyl diphosphate (DMAPP), two major building blocks of isoprenoid compounds. Catalyzes the conversion of 4-diphosphocytidyl-2-C-methyl-D-erythritol 2-phosphate (CDP-ME2P) to 2-C-methyl-D-erythritol 2,4-cyclodiphosphate (ME-CPP) with a corresponding release of cytidine 5-monophosphate (CMP). The chain is 2-C-methyl-D-erythritol 2,4-cyclodiphosphate synthase from Clostridium botulinum (strain Okra / Type B1).